Consider the following 359-residue polypeptide: Probable dual-specificity RNA methyltransferase RlmN (359 aa).

The active-site Proton acceptor is the Glu-100. Residues 106 to 340 (TDKRLTVCVS…VSVRASRGRD (235 aa)) form the Radical SAM core domain. A disulfide bond links Cys-113 and Cys-345. [4Fe-4S] cluster contacts are provided by Cys-120, Cys-124, and Cys-127. Residues 167-168 (GE), Ser-197, 226-228 (SLH), and Asn-302 contribute to the S-adenosyl-L-methionine site. The active-site S-methylcysteine intermediate is Cys-345.

It belongs to the radical SAM superfamily. RlmN family. [4Fe-4S] cluster serves as cofactor.

It is found in the cytoplasm. The enzyme catalyses adenosine(2503) in 23S rRNA + 2 reduced [2Fe-2S]-[ferredoxin] + 2 S-adenosyl-L-methionine = 2-methyladenosine(2503) in 23S rRNA + 5'-deoxyadenosine + L-methionine + 2 oxidized [2Fe-2S]-[ferredoxin] + S-adenosyl-L-homocysteine. The catalysed reaction is adenosine(37) in tRNA + 2 reduced [2Fe-2S]-[ferredoxin] + 2 S-adenosyl-L-methionine = 2-methyladenosine(37) in tRNA + 5'-deoxyadenosine + L-methionine + 2 oxidized [2Fe-2S]-[ferredoxin] + S-adenosyl-L-homocysteine. Functionally, specifically methylates position 2 of adenine 2503 in 23S rRNA and position 2 of adenine 37 in tRNAs. This Prochlorococcus marinus (strain NATL2A) protein is Probable dual-specificity RNA methyltransferase RlmN.